A 105-amino-acid polypeptide reads, in one-letter code: Large ribosomal subunit protein bL21 (105 aa).

The protein belongs to the bacterial ribosomal protein bL21 family. In terms of assembly, part of the 50S ribosomal subunit. Contacts protein L20.

In terms of biological role, this protein binds to 23S rRNA in the presence of protein L20. This chain is Large ribosomal subunit protein bL21, found in Rhizobium etli (strain ATCC 51251 / DSM 11541 / JCM 21823 / NBRC 15573 / CFN 42).